Reading from the N-terminus, the 428-residue chain is Probable 4-methylmuconolactone transporter (428 aa).

Topologically, residues 1 to 26 (MFAWYKAGSPQQKKTFWACYSGWALD) are cytoplasmic. The chain crosses the membrane as a helical span at residues 27-47 (SFDMQMFSFLLPALTLTWGLT). The Periplasmic segment spans residues 48–50 (KAE). Residues 51–71 (VGVLGTVALVVTAIGGWGAGI) form a helical membrane-spanning segment. The Cytoplasmic segment spans residues 72 to 80 (LSDRYGRAR). A helical membrane pass occupies residues 81–101 (ILVLAIIWFTLFGVLAGFAQS). At 102–110 (YQQLLIART) the chain is on the periplasmic side. A helical membrane pass occupies residues 111 to 131 (LQGLGFGGEWAVGAALMAEVI). Over 132-145 (DSRHRGKAIGFVQS) the chain is Cytoplasmic. Residues 146-166 (GFALGWALAVVVATLLLAWLP) form a helical membrane-spanning segment. K167 is a topological domain (periplasmic). A helical membrane pass occupies residues 168–188 (EMAWRVAFWSGIIPALIVLFI). Residues 189–227 (RRHVKDSSMFERARQSRAPRASLSSVFNRKYARTLALSS) are Cytoplasmic-facing. The chain crosses the membrane as a helical span at residues 228-248 (VLVIGLQAGCYAILVWLPSLL). Topologically, residues 249–252 (NQRQ) are periplasmic. The chain crosses the membrane as a helical span at residues 253-273 (VAAGSMIVTVFIMAFGSFCGF). Over 274–287 (AVTADLSDRIGRRP) the chain is Cytoplasmic. A helical transmembrane segment spans residues 288–308 (TLILLSVCAWIVTVSYMLLPL). The Periplasmic portion of the chain corresponds to 309–314 (NTTLTA). The helical transmembrane segment at 315-335 (ILGFLVGFSAIGMFAALGPFL) threads the bilayer. The Cytoplasmic portion of the chain corresponds to 336-356 (SELFPTNVRTTCMGFAYNVGK). A helical transmembrane segment spans residues 357-371 (SIGAGSVVGVGVLST). The Periplasmic segment spans residues 372–377 (HIGLAN). The helical transmembrane segment at 378–398 (AMGTFCLVAYAFAVFGIMLLP) threads the bilayer. Residues 399–428 (ETRGIAIENIGEADAHSPAAPLAQPASARS) lie on the Cytoplasmic side of the membrane.

Belongs to the major facilitator superfamily. Sugar transporter (TC 2.A.1.1) family.

It localises to the cell inner membrane. Its function is as follows. Probable uptake of 4-methylmuconolactone. This chain is Probable 4-methylmuconolactone transporter, found in Cupriavidus pinatubonensis (strain JMP 134 / LMG 1197) (Cupriavidus necator (strain JMP 134)).